The sequence spans 568 residues: Envelope glycoprotein E (568 aa).

Positions 1 to 20 (MMPATLAGLALAVTVATMFA) are cleaved as a signal peptide. Residues 21-422 (QRVDSTTIHH…GGGPGNSKRR (402 aa)) are Virion surface-facing. N-linked (GlcNAc...) asparagine; by host glycans are attached at residues N88, N179, and N248. A disulfide bridge connects residues C271 and C280. A helical membrane pass occupies residues 423–443 (AAVLGAAVWIALTLLILGGLG). Over 444 to 568 (AYVAVNKKCL…ANKTFPSQRY (125 aa)) the chain is Intravirion. Residues 465–468 (KPTL) carry the Internalization motif motif. Residues 470 to 534 (THAHTYTSLP…SRRNSFGPTL (65 aa)) are disordered. The tract at residues 482 to 497 (GDLSLEQDAEDEDEDE) is acidic. The span at 486–500 (LEQDAEDEDEDEEEL) shows a compositional bias: acidic residues. Over residues 515 to 526 (KSSRSPSRRSSR) the composition is skewed to basic residues.

It belongs to the alphaherpesvirinae glycoprotein E family. As to quaternary structure, interacts with gI. Post-translationally, phosphorylated on serines within the acidic cluster. Phosphorylation determines whether endocytosed viral gE traffics to the trans-Golgi network or recycles to the cell membrane.

The protein resides in the virion membrane. It is found in the host cell membrane. It localises to the host cell junction. Its subcellular location is the host Golgi apparatus membrane. The protein localises to the host endosome membrane. Functionally, in epithelial cells, the heterodimer gE/gI is required for the cell-to-cell spread of the virus, by sorting nascent virions to cell junctions. Once the virus reaches the cell junctions, virus particles can spread to adjacent cells extremely rapidly through interactions with cellular receptors that accumulate at these junctions. Implicated in basolateral spread in polarized cells. In neuronal cells, gE/gI is essential for the anterograde spread of the infection throughout the host nervous system. Together with US9, the heterodimer gE/gI is involved in the sorting and transport of viral structural components toward axon tips. The sequence is that of Envelope glycoprotein E (US8) from Psittacid herpesvirus 1 (isolate Amazon parrot/-/97-0001/1997) (PsHV-1).